A 185-amino-acid chain; its full sequence is Large ribosomal subunit protein uL13 (185 aa).

This sequence belongs to the universal ribosomal protein uL13 family. Part of the 50S ribosomal subunit.

In terms of biological role, this protein is one of the early assembly proteins of the 50S ribosomal subunit, although it is not seen to bind rRNA by itself. It is important during the early stages of 50S assembly. The chain is Large ribosomal subunit protein uL13 from Pyrobaculum islandicum (strain DSM 4184 / JCM 9189 / GEO3).